Reading from the N-terminus, the 306-residue chain is UDP-3-O-acyl-N-acetylglucosamine deacetylase (306 aa).

Zn(2+)-binding residues include His-79, His-238, and Asp-242. His-265 serves as the catalytic Proton donor.

It belongs to the LpxC family. The cofactor is Zn(2+).

The catalysed reaction is a UDP-3-O-[(3R)-3-hydroxyacyl]-N-acetyl-alpha-D-glucosamine + H2O = a UDP-3-O-[(3R)-3-hydroxyacyl]-alpha-D-glucosamine + acetate. Its pathway is glycolipid biosynthesis; lipid IV(A) biosynthesis; lipid IV(A) from (3R)-3-hydroxytetradecanoyl-[acyl-carrier-protein] and UDP-N-acetyl-alpha-D-glucosamine: step 2/6. Functionally, catalyzes the hydrolysis of UDP-3-O-myristoyl-N-acetylglucosamine to form UDP-3-O-myristoylglucosamine and acetate, the committed step in lipid A biosynthesis. The sequence is that of UDP-3-O-acyl-N-acetylglucosamine deacetylase from Idiomarina loihiensis (strain ATCC BAA-735 / DSM 15497 / L2-TR).